A 309-amino-acid polypeptide reads, in one-letter code: Probable cell wall protein PGA50 (309 aa).

The N-terminal stretch at 1–17 (MKLNLLLLLFIVELVAA) is a signal peptide. N-linked (GlcNAc...) asparagine glycans are attached at residues Asn-67, Asn-115, Asn-248, Asn-267, and Asn-277. Residues 241–281 (STTTFSSNGTSSGTTNGDTRAETKSSNSTQTSSSDKNSSQI) are disordered. Ser-286 carries the GPI-anchor amidated serine lipid modification. A propeptide spans 287-309 (TGVANFVASFGMGTLLLFVLSLC) (removed in mature form).

This sequence belongs to the IHD1 family. Post-translationally, the GPI-anchor is attached to the protein in the endoplasmic reticulum and serves to target the protein to the cell surface. There, the glucosamine-inositol phospholipid moiety is cleaved off and the GPI-modified mannoprotein is covalently attached via its lipidless GPI glycan remnant to the 1,6-beta-glucan of the outer cell wall layer.

The protein localises to the secreted. It is found in the cell wall. It localises to the membrane. Probable GPI-anchored cell wall protein that may be involved in cell wall organization, hyphal growth, as well as in virulence. The polypeptide is Probable cell wall protein PGA50 (PGA50) (Candida albicans (strain SC5314 / ATCC MYA-2876) (Yeast)).